We begin with the raw amino-acid sequence, 255 residues long: Polycomb group RING finger protein 5 (255 aa).

An RING-type zinc finger spans residues 18–57 (CYICKGYLIKPTTVTECLHTFCKTCIVQHFEDSNDCPRCG). Residues 97-132 (WKKNKPQENGQDDMSKVDKPKVDEEGDENQDDKDYH) form a disordered region. Over residues 109 to 119 (DMSKVDKPKVD) the composition is skewed to basic and acidic residues.

In terms of assembly, component of a PRC1-like complex that contains PCGF5, RNF2 and UBE2D3. Interacts with RNF2; the interaction is direct. Interacts with CBX6, CBX7 and CBX8. Interacts with AUTS2; the interaction is direct. Identified in a complex that contains AUTS2, PCGF5, CSNK2B and RNF2.

Its subcellular location is the nucleus. The protein resides in the nucleoplasm. Component of a Polycomb group (PcG) multiprotein PRC1-like complex, a complex class required to maintain the transcriptionally repressive state of many genes, including Hox genes, throughout development. PcG PRC1 complex acts via chromatin remodeling and modification of histones; it mediates monoubiquitination of histone H2A 'Lys-119', rendering chromatin heritably changed in its expressibility. Within the PRC1-like complex, regulates RNF2 ubiquitin ligase activity. Plays a redundant role with PCGF3 as part of a PRC1-like complex that mediates monoubiquitination of histone H2A 'Lys-119' on the X chromosome and is required for normal silencing of one copy of the X chromosome in XX females. The protein is Polycomb group RING finger protein 5 (PCGF5) of Bos taurus (Bovine).